Reading from the N-terminus, the 57-residue chain is UPF0434 protein swp_2279 (57 aa).

It belongs to the UPF0434 family.

In Shewanella piezotolerans (strain WP3 / JCM 13877), this protein is UPF0434 protein swp_2279.